We begin with the raw amino-acid sequence, 161 residues long: Ethylene-responsive transcription factor ERF070 (161 aa).

The disordered stretch occupies residues 1 to 35 (MKRIIRISFTDAEATDSSSDEDTEERGGASQTRRR). A DNA-binding region (AP2/ERF) is located at residues 78-140 (KYRGVRQRPW…IGPHAPTNFG (63 aa)).

Belongs to the AP2/ERF transcription factor family. ERF subfamily.

Its subcellular location is the nucleus. Functionally, probably acts as a transcriptional activator. Binds to the GCC-box pathogenesis-related promoter element. May be involved in the regulation of gene expression by stress factors and by components of stress signal transduction pathways. This Arabidopsis thaliana (Mouse-ear cress) protein is Ethylene-responsive transcription factor ERF070 (ERF070).